A 521-amino-acid polypeptide reads, in one-letter code: Apolipoprotein N-acyltransferase (521 aa).

Helical transmembrane passes span 34 to 54 (LAAP…PLLV), 64 to 84 (AFWL…RWLL), 100 to 120 (LAIA…VIGL), 137 to 157 (LFAV…ETAF), 176 to 196 (VALG…ALVA), and 206 to 226 (YAGL…WQLA). The CN hydrolase domain maps to 240 to 480 (IQGNIAQARK…YAAFVEPVRL (241 aa)). The Proton acceptor role is filled by Glu-281. The active site involves Lys-341. The Nucleophile role is filled by Cys-392. A helical membrane pass occupies residues 488–508 (ALWGDWFVPLSAALALLGLIA).

The protein belongs to the CN hydrolase family. Apolipoprotein N-acyltransferase subfamily.

The protein localises to the cell inner membrane. It carries out the reaction N-terminal S-1,2-diacyl-sn-glyceryl-L-cysteinyl-[lipoprotein] + a glycerophospholipid = N-acyl-S-1,2-diacyl-sn-glyceryl-L-cysteinyl-[lipoprotein] + a 2-acyl-sn-glycero-3-phospholipid + H(+). Its pathway is protein modification; lipoprotein biosynthesis (N-acyl transfer). Functionally, catalyzes the phospholipid dependent N-acylation of the N-terminal cysteine of apolipoprotein, the last step in lipoprotein maturation. The polypeptide is Apolipoprotein N-acyltransferase (Gloeobacter violaceus (strain ATCC 29082 / PCC 7421)).